The sequence spans 396 residues: Methionine import ATP-binding protein MetN 2 (396 aa).

Residues 41–280 (VSFELVGKVF…PRHGATRALL (240 aa)) enclose the ABC transporter domain. 77 to 84 (GRSGAGKS) provides a ligand contact to ATP.

This sequence belongs to the ABC transporter superfamily. Methionine importer (TC 3.A.1.24) family. The complex is composed of two ATP-binding proteins (MetN), two transmembrane proteins (MetI) and a solute-binding protein (MetQ).

It is found in the cell inner membrane. It carries out the reaction L-methionine(out) + ATP + H2O = L-methionine(in) + ADP + phosphate + H(+). The catalysed reaction is D-methionine(out) + ATP + H2O = D-methionine(in) + ADP + phosphate + H(+). In terms of biological role, part of the ABC transporter complex MetNIQ involved in methionine import. Responsible for energy coupling to the transport system. The polypeptide is Methionine import ATP-binding protein MetN 2 (Burkholderia mallei (strain ATCC 23344)).